The sequence spans 117 residues: Large ribosomal subunit protein bL20c (117 aa).

It belongs to the bacterial ribosomal protein bL20 family.

It localises to the plastid. It is found in the chloroplast. Its function is as follows. Binds directly to 23S ribosomal RNA and is necessary for the in vitro assembly process of the 50S ribosomal subunit. It is not involved in the protein synthesizing functions of that subunit. The chain is Large ribosomal subunit protein bL20c from Barbarea verna (Land cress).